The following is a 320-amino-acid chain: ATP-dependent 6-phosphofructokinase (320 aa).

Residues G12, 73–74, and 103–106 contribute to the ATP site; these read RF and GDGS. D104 serves as a coordination point for Mg(2+). 126–128 is a binding site for substrate; that stretch reads TID. Catalysis depends on D128, which acts as the Proton acceptor. R155 serves as a coordination point for ADP. Substrate contacts are provided by residues R163 and 170 to 172; that span reads MGR. ADP contacts are provided by residues 186-188 and K212; that span reads GCE. Residues E223, R244, and 250–253 each bind substrate; that span reads HIQR.

The protein belongs to the phosphofructokinase type A (PFKA) family. ATP-dependent PFK group I subfamily. Prokaryotic clade 'B1' sub-subfamily. Homotetramer. Mg(2+) serves as cofactor.

Its subcellular location is the cytoplasm. It carries out the reaction beta-D-fructose 6-phosphate + ATP = beta-D-fructose 1,6-bisphosphate + ADP + H(+). The protein operates within carbohydrate degradation; glycolysis; D-glyceraldehyde 3-phosphate and glycerone phosphate from D-glucose: step 3/4. Allosterically activated by ADP and other diphosphonucleosides, and allosterically inhibited by phosphoenolpyruvate. Its function is as follows. Catalyzes the phosphorylation of D-fructose 6-phosphate to fructose 1,6-bisphosphate by ATP, the first committing step of glycolysis. This is ATP-dependent 6-phosphofructokinase from Buchnera aphidicola subsp. Cinara cedri (strain Cc).